The chain runs to 53 residues: uncharacterized protein (53 aa).

2 helical membrane passes run 3-22 (LFGM…GVLL) and 26-45 (AFFF…FTVL).

Its subcellular location is the cell membrane. This is an uncharacterized protein from Bacillus subtilis (strain 168).